The following is a 151-amino-acid chain: Large ribosomal subunit protein uL13 (151 aa).

This sequence belongs to the universal ribosomal protein uL13 family. As to quaternary structure, part of the 50S ribosomal subunit.

Its function is as follows. This protein is one of the early assembly proteins of the 50S ribosomal subunit, although it is not seen to bind rRNA by itself. It is important during the early stages of 50S assembly. The protein is Large ribosomal subunit protein uL13 of Synechococcus sp. (strain JA-3-3Ab) (Cyanobacteria bacterium Yellowstone A-Prime).